Consider the following 567-residue polypeptide: DNA ligase B (567 aa).

Catalysis depends on Lys132, which acts as the N6-AMP-lysine intermediate.

It belongs to the NAD-dependent DNA ligase family. LigB subfamily.

It catalyses the reaction NAD(+) + (deoxyribonucleotide)n-3'-hydroxyl + 5'-phospho-(deoxyribonucleotide)m = (deoxyribonucleotide)n+m + AMP + beta-nicotinamide D-nucleotide.. In terms of biological role, catalyzes the formation of phosphodiester linkages between 5'-phosphoryl and 3'-hydroxyl groups in double-stranded DNA using NAD as a coenzyme and as the energy source for the reaction. The polypeptide is DNA ligase B (Yersinia pseudotuberculosis serotype O:1b (strain IP 31758)).